A 262-amino-acid chain; its full sequence is MAVGKNKRVSKGKKGAKKKVIDPFSRKEWYNLKAPVTFNVRNFGQTLVTKTIGTKLATDGLKGRVFEMSLADLNADEDQAYRKIKLSCEDVQGRNCLTDFHGTSVTRDKLCSLIRKNYSLIEAFADVKTLDGYNLRMFCVGYTKRRPGQLKSTCYVRSSKVRLIHKKMVAVMTNEASNSTLKELVKKVIPESIGKEIEKACKSIFPLQNVLVRKIKVLKKPKFDLTKLMESHNYSGEEEGHTLKVKESENATNLLTAELQSS.

Belongs to the eukaryotic ribosomal protein eS1 family. Component of the small ribosomal subunit. Mature ribosomes consist of a small (40S) and a large (60S) subunit. The 40S subunit contains about 33 different proteins and 1 molecule of RNA (18S). The 60S subunit contains about 49 different proteins and 3 molecules of RNA (25S, 5.8S and 5S).

It is found in the cytoplasm. The polypeptide is Small ribosomal subunit protein eS1 (Theileria annulata).